A 507-amino-acid chain; its full sequence is Glutamyl-tRNA(Gln) amidotransferase subunit A, mitochondrial (507 aa).

Catalysis depends on charge relay system residues Lys79 and Ser160. Catalysis depends on Ser184, which acts as the Acyl-ester intermediate.

The protein belongs to the amidase family. GatA subfamily. In terms of assembly, subunit of the heterotrimeric GatCAB amidotransferase (AdT) complex, composed of A, B and C subunits.

The protein resides in the mitochondrion. It catalyses the reaction L-glutamyl-tRNA(Gln) + L-glutamine + ATP + H2O = L-glutaminyl-tRNA(Gln) + L-glutamate + ADP + phosphate + H(+). Functionally, allows the formation of correctly charged Gln-tRNA(Gln) through the transamidation of misacylated Glu-tRNA(Gln) in the mitochondria. The reaction takes place in the presence of glutamine and ATP through an activated gamma-phospho-Glu-tRNA(Gln). The sequence is that of Glutamyl-tRNA(Gln) amidotransferase subunit A, mitochondrial from Drosophila pseudoobscura pseudoobscura (Fruit fly).